Reading from the N-terminus, the 592-residue chain is MLRRALEEAIAQALKEMGVPVRLKVARAPKDKPGDYGVPLFALAKELRKPPQAIAQELKDRLPLPEFVEEAVPVGGYLNFRLRTEALLREALRPKAPFPRRPGVVLVEHTSVNPNKELHVGHLRNIALGDAIARILAYAGREVLVLNYIDDTGRQAAETLFALRHYGLTWDGKEKYDHFAGRAYVRLHQDPEYERLQPAIEEVLHALERGELREEVNRILLAQMATMHALNARYDLLVWESDIVRAGLLQKALALLEQSPHVFRPREGKYAGALVMDASPVIPGLEDPFFVLLRSNGTATYYAKDIAFQFWKMGILEGLRFRPYENPYYPGLRTSAPEGEAYTPKAEETINVVDVRQSHPQALVRAALALAGYPALAEKAHHLAYETVLLEGRQMSGRKGLAVSVDEVLEEATRRARAIVEEKNPDHPDKEEAARMVALGAIRFSMVKTEPKKQIDFRYQEALSFEGDTGPYVQYAHARAHSILRKAGEWGAPDLSQATPYERALALDLLDFEEAVLEAAEERTPHVLAQYLLDLAASWNAYYNARENGQPATPVLTAPEGLRELRLSLVQSLQRTLATGLDLLGIPAPEVM.

Residues 112 to 122 carry the 'HIGH' region motif; that stretch reads VNPNKELHVGH.

It belongs to the class-I aminoacyl-tRNA synthetase family. As to quaternary structure, monomer.

It localises to the cytoplasm. It catalyses the reaction tRNA(Arg) + L-arginine + ATP = L-arginyl-tRNA(Arg) + AMP + diphosphate. The polypeptide is Arginine--tRNA ligase (Thermus thermophilus (strain ATCC 27634 / DSM 579 / HB8)).